The chain runs to 212 residues: Deoxyribose-phosphate aldolase (212 aa).

D89 serves as the catalytic Proton donor/acceptor. K151 acts as the Schiff-base intermediate with acetaldehyde in catalysis. K180 functions as the Proton donor/acceptor in the catalytic mechanism.

Belongs to the DeoC/FbaB aldolase family. DeoC type 1 subfamily.

It is found in the cytoplasm. It carries out the reaction 2-deoxy-D-ribose 5-phosphate = D-glyceraldehyde 3-phosphate + acetaldehyde. It functions in the pathway carbohydrate degradation; 2-deoxy-D-ribose 1-phosphate degradation; D-glyceraldehyde 3-phosphate and acetaldehyde from 2-deoxy-alpha-D-ribose 1-phosphate: step 2/2. Catalyzes a reversible aldol reaction between acetaldehyde and D-glyceraldehyde 3-phosphate to generate 2-deoxy-D-ribose 5-phosphate. This chain is Deoxyribose-phosphate aldolase, found in Clostridium botulinum (strain ATCC 19397 / Type A).